The following is a 747-amino-acid chain: Histone-lysine N-methyltransferase EZH1 (747 aa).

Residues 188-231 (DEEEEGHNDTSDGKQDDSKEDLPVTRKRKRHAIEGNKKSSKKQF) form a disordered region. Positions 194–211 (HNDTSDGKQDDSKEDLPV) are enriched in basic and acidic residues. A Glycyl lysine isopeptide (Lys-Gly) (interchain with G-Cter in SUMO2) cross-link involves residue lysine 327. Residues 378 to 421 (SAVAETKEGDSDRDTGNDWASSSSEANSRCQTPTKQKASPAPPQ) are disordered. Residues 382–393 (ETKEGDSDRDTG) are compositionally biased toward basic and acidic residues. Residues 395–414 (DWASSSSEANSRCQTPTKQK) are compositionally biased toward polar residues. A Nuclear localization signal motif is present at residues 491–496 (QKKKRK). One can recognise a CXC domain in the interval 504–606 (CRKIQLKKDN…CKVVSCKNCS (103 aa)). Residues 613-728 (KHLLLAPSDV…AGEELFLDYR (116 aa)) enclose the SET domain.

This sequence belongs to the class V-like SAM-binding methyltransferase superfamily. Histone-lysine methyltransferase family. EZ subfamily. In terms of assembly, component of the PRC2/EED-EZH1 complex, which includes EED, EZH1, SUZ12, RBBP4 and AEBP2. The PRC2/EED-EZH1 is less abundant than the PRC2/EED-EZH2 complex, has weak methyltransferase activity and compacts chromatin in the absence of the methyltransferase cofactor S-adenosyl-L-methionine (SAM). Interacts with EZHIP; the interaction blocks EZH1 methyltransferase activity.

The protein resides in the nucleus. The enzyme catalyses L-lysyl(27)-[histone H3] + 3 S-adenosyl-L-methionine = N(6),N(6),N(6)-trimethyl-L-lysyl(27)-[histone H3] + 3 S-adenosyl-L-homocysteine + 3 H(+). Its function is as follows. Polycomb group (PcG) protein. Catalytic subunit of the PRC2/EED-EZH1 complex, which methylates 'Lys-27' of histone H3, leading to transcriptional repression of the affected target gene. Able to mono-, di- and trimethylate 'Lys-27' of histone H3 to form H3K27me1, H3K27me2 and H3K27me3, respectively. Required for embryonic stem cell derivation and self-renewal, suggesting that it is involved in safeguarding embryonic stem cell identity. Compared to EZH2-containing complexes, it is less abundant in embryonic stem cells, has weak methyltransferase activity and plays a less critical role in forming H3K27me3, which is required for embryonic stem cell identity and proper differentiation. The chain is Histone-lysine N-methyltransferase EZH1 (EZH1) from Pongo abelii (Sumatran orangutan).